Consider the following 196-residue polypeptide: NAD(P)H-quinone oxidoreductase subunit I (196 aa).

4Fe-4S ferredoxin-type domains lie at 54–83 and 94–123; these read GRIH…VDWV and KHYS…VTEE. Residues cysteine 63, cysteine 66, cysteine 69, cysteine 73, cysteine 103, cysteine 106, cysteine 109, and cysteine 113 each contribute to the [4Fe-4S] cluster site. Residues 174–196 are disordered; the sequence is PAGAQRAGERPEAIANTAKSSEN.

It belongs to the complex I 23 kDa subunit family. In terms of assembly, NDH-1 is composed of at least 11 different subunits. The cofactor is [4Fe-4S] cluster.

Its subcellular location is the cellular thylakoid membrane. It catalyses the reaction a plastoquinone + NADH + (n+1) H(+)(in) = a plastoquinol + NAD(+) + n H(+)(out). The catalysed reaction is a plastoquinone + NADPH + (n+1) H(+)(in) = a plastoquinol + NADP(+) + n H(+)(out). Its function is as follows. NDH-1 shuttles electrons from an unknown electron donor, via FMN and iron-sulfur (Fe-S) centers, to quinones in the respiratory and/or the photosynthetic chain. The immediate electron acceptor for the enzyme in this species is believed to be plastoquinone. Couples the redox reaction to proton translocation, and thus conserves the redox energy in a proton gradient. This chain is NAD(P)H-quinone oxidoreductase subunit I, found in Thermosynechococcus vestitus (strain NIES-2133 / IAM M-273 / BP-1).